The chain runs to 493 residues: MQIEMKDIHKTFGKNQVLSGVSFQLMPGEVHALMGENGAGKSTLMNILTGLHKADKGQISINGNETYFSNPKEAEQHGIAFIHQELNIWPEMTVLENLFIGKEISSKLGVLQTRKMKALAKEQFDKLSVSLSLDQEAGECSVGQQQMIEIAKALMTNAEVIIMDEPTAALTEREISKLFEVITALKKNGVSIVYISHRMEEIFAICDRITIMRDGKTVDTTNISETDFDEVVKKMVGRELTERYPKRTPSLGDKVFEVKNASVKGSFEDVSFYVRSGEIVGVSGLMGAGRTEMMRALFGVDRLDTGEIWIAGKKTAIKNPQEAVKKGLGFITENRKDEGLLLDTSIRENIALPNLSSFSPKGLIDHKREAEFVDLLIKRLTIKTASPETHARHLSGGNQQKVVIAKWIGIGPKVLILDEPTRGVDVGAKREIYTLMNELTERGVAIIMVSSELPEILGMSDRIIVVHEGRISGEIHAREATQERIMTLATGGR.

2 ABC transporter domains span residues Ile-3–Glu-239 and Lys-246–Arg-493. Position 35-42 (Gly-35–Ser-42) interacts with ATP.

The protein belongs to the ABC transporter superfamily. Ribose importer (TC 3.A.1.2.1) family. As to quaternary structure, the complex is composed of an ATP-binding protein (RbsA), two transmembrane proteins (RbsC) and a solute-binding protein (RbsB).

It is found in the cell membrane. The enzyme catalyses D-ribose(out) + ATP + H2O = D-ribose(in) + ADP + phosphate + H(+). Its function is as follows. Part of the ABC transporter complex RbsABC involved in ribose import. Responsible for energy coupling to the transport system. This chain is Ribose import ATP-binding protein RbsA, found in Bacillus subtilis (strain 168).